Here is a 212-residue protein sequence, read N- to C-terminus: Phosphatidylserine decarboxylase proenzyme (212 aa).

The active-site Schiff-base intermediate with substrate; via pyruvic acid is serine 182. At serine 182 the chain carries Pyruvic acid (Ser); by autocatalysis.

It belongs to the phosphatidylserine decarboxylase family. PSD-A subfamily. In terms of assembly, heterodimer of a large membrane-associated beta subunit and a small pyruvoyl-containing alpha subunit. It depends on pyruvate as a cofactor. Is synthesized initially as an inactive proenzyme. Formation of the active enzyme involves a self-maturation process in which the active site pyruvoyl group is generated from an internal serine residue via an autocatalytic post-translational modification. Two non-identical subunits are generated from the proenzyme in this reaction, and the pyruvate is formed at the N-terminus of the alpha chain, which is derived from the carboxyl end of the proenzyme. The post-translation cleavage follows an unusual pathway, termed non-hydrolytic serinolysis, in which the side chain hydroxyl group of the serine supplies its oxygen atom to form the C-terminus of the beta chain, while the remainder of the serine residue undergoes an oxidative deamination to produce ammonia and the pyruvoyl prosthetic group on the alpha chain.

It localises to the cell membrane. The enzyme catalyses a 1,2-diacyl-sn-glycero-3-phospho-L-serine + H(+) = a 1,2-diacyl-sn-glycero-3-phosphoethanolamine + CO2. It participates in phospholipid metabolism; phosphatidylethanolamine biosynthesis; phosphatidylethanolamine from CDP-diacylglycerol: step 2/2. Its function is as follows. Catalyzes the formation of phosphatidylethanolamine (PtdEtn) from phosphatidylserine (PtdSer). The sequence is that of Phosphatidylserine decarboxylase proenzyme from Chlorobium phaeobacteroides (strain DSM 266 / SMG 266 / 2430).